The chain runs to 397 residues: LIM/homeobox protein Lhx9 (397 aa).

LIM zinc-binding domains lie at 69–130 and 131–193; these read ALCA…RFSV and QRCA…LLQG. Disordered stretches follow at residues 248–272, 330–364, and 378–397; these read ENEA…RMRT, ENGG…TLTD, and SNMD…TNLF. Residues 267–326 constitute a DNA-binding region (homeobox); it reads TKRMRTSFKHHQLRTMKSYFAINHNPDAKDLKQLAQKTGLTKRVLQVWFQNARAKFRRNL. Residues 353–364 show a composition bias toward low complexity; that stretch reads LTPPGTATTLTD.

In terms of assembly, interacts with LDB1 and LDB2.

The protein localises to the nucleus. Involved in gonadal development. The polypeptide is LIM/homeobox protein Lhx9 (LHX9) (Homo sapiens (Human)).